Consider the following 134-residue polypeptide: Calvin cycle protein CP12-3, chloroplastic (134 aa).

Positions 1–21 are disordered; sequence MISGSATASHGRVLLPSQRER. A chloroplast-targeting transit peptide spans 1–42; it reads MISGSATASHGRVLLPSQRERRPVSTGSNILRFRETVPRQFS. 2 disulfides stabilise this stretch: Cys78–Cys87 and Cys120–Cys129.

The protein belongs to the CP12 family. As to quaternary structure, monomer. Component of a complex that contains two dimers of PRK, two tetramers of GAPDH and CP12. CP12 associates with GAPDH, causing its conformation to change. This GAPDH/CP12 complex binds PRK to form a half-complex (one unit). This unit probably dimerizes due partially to interactions between the enzymes of each unit. Contains two disulfide bonds; only the oxidized protein, with two disulfide bonds, is active in complex formation. The C-terminal disulfide is involved in the interaction with GAPDH and the N-terminal disulfide mediates the binding of PRK with this binary complex. As to expression, mostly expressed, at low levels, in stems and, to a lesser extent, in leaves and roots.

It is found in the plastid. It localises to the chloroplast. In terms of biological role, acts as a linker essential in the assembly of a core complex of PRK/GAPDH. Coordinates the reversible inactivation of chloroplast enzymes GAPDH and PRK during darkness in photosynthetic tissues. The protein is Calvin cycle protein CP12-3, chloroplastic (CP12-3) of Arabidopsis thaliana (Mouse-ear cress).